The following is a 222-amino-acid chain: UPF0128 protein PF1488 (222 aa).

The protein belongs to the UPF0128 family.

This is UPF0128 protein PF1488 from Pyrococcus furiosus (strain ATCC 43587 / DSM 3638 / JCM 8422 / Vc1).